Here is a 247-residue protein sequence, read N- to C-terminus: Sugar fermentation stimulation protein homolog (247 aa).

The protein belongs to the SfsA family.

This chain is Sugar fermentation stimulation protein homolog, found in Methylorubrum populi (strain ATCC BAA-705 / NCIMB 13946 / BJ001) (Methylobacterium populi).